The following is a 123-amino-acid chain: Large ribosomal subunit protein uL14 (123 aa).

Belongs to the universal ribosomal protein uL14 family. Part of the 50S ribosomal subunit. Forms a cluster with proteins L3 and L19. In the 70S ribosome, L14 and L19 interact and together make contacts with the 16S rRNA in bridges B5 and B8.

Its function is as follows. Binds to 23S rRNA. Forms part of two intersubunit bridges in the 70S ribosome. The protein is Large ribosomal subunit protein uL14 of Sodalis glossinidius (strain morsitans).